The primary structure comprises 633 residues: Phosphomethylpyrimidine synthase (633 aa).

Residues asparagine 245, methionine 274, tyrosine 303, histidine 339, 359–361, 400–403, and glutamate 439 each bind substrate; these read SRG and DGLR. Zn(2+) is bound at residue histidine 443. Substrate is bound at residue tyrosine 466. Histidine 507 lines the Zn(2+) pocket. The [4Fe-4S] cluster site is built by cysteine 587, cysteine 590, and cysteine 595.

This sequence belongs to the ThiC family. In terms of assembly, homodimer. [4Fe-4S] cluster serves as cofactor.

It carries out the reaction 5-amino-1-(5-phospho-beta-D-ribosyl)imidazole + S-adenosyl-L-methionine = 4-amino-2-methyl-5-(phosphooxymethyl)pyrimidine + CO + 5'-deoxyadenosine + formate + L-methionine + 3 H(+). It functions in the pathway cofactor biosynthesis; thiamine diphosphate biosynthesis. Catalyzes the synthesis of the hydroxymethylpyrimidine phosphate (HMP-P) moiety of thiamine from aminoimidazole ribotide (AIR) in a radical S-adenosyl-L-methionine (SAM)-dependent reaction. This is Phosphomethylpyrimidine synthase from Neisseria meningitidis serogroup A / serotype 4A (strain DSM 15465 / Z2491).